The sequence spans 778 residues: Dynein axonemal intermediate chain 4 (778 aa).

6 WD repeats span residues 477–517, 526–573, 586–629, 633–673, 676–715, and 721–760; these read HCES…QTPI, LHTS…ECVD, RHIS…QYLE, AHKR…PVMG, SGQR…LDPT, and SPGV…AGGG.

Part of the multisubunit axonemal dynein complex formed at least of two heavy chains and a number of intermediate and light chains.

The protein resides in the cytoplasm. It localises to the cytoskeleton. Its subcellular location is the flagellum axoneme. It is found in the cilium axoneme. The protein localises to the dynein axonemal particle. In terms of biological role, plays a critical role in the assembly of axonemal dynein complex. Plays a key role in ciliary motility. This Danio rerio (Zebrafish) protein is Dynein axonemal intermediate chain 4.